The sequence spans 90 residues: Hemoglobin subunit alpha-1 (90 aa).

A Globin domain is found at 1 to 90 (VLTDDDKNHV…SKLSDLHAEK (90 aa)).

It belongs to the globin family. In terms of assembly, heterotetramer of two alpha chains and two beta chains. As to expression, red blood cells.

Its function is as follows. Involved in oxygen transport from the lung to the various peripheral tissues. This is Hemoglobin subunit alpha-1 from Saara hardwickii (Indian spiny-tailed lizard).